The chain runs to 217 residues: Ribosomal RNA small subunit methyltransferase G (217 aa).

S-adenosyl-L-methionine contacts are provided by residues Gly78, Phe83, 129 to 130, and Arg146; that span reads AE.

This sequence belongs to the methyltransferase superfamily. RNA methyltransferase RsmG family.

It localises to the cytoplasm. The enzyme catalyses guanosine(527) in 16S rRNA + S-adenosyl-L-methionine = N(7)-methylguanosine(527) in 16S rRNA + S-adenosyl-L-homocysteine. Functionally, specifically methylates the N7 position of guanine in position 527 of 16S rRNA. This chain is Ribosomal RNA small subunit methyltransferase G, found in Geobacter sp. (strain M21).